The sequence spans 318 residues: Potassium channel subfamily K member 15 (318 aa).

Over methionine 1–threonine 8 the chain is Cytoplasmic. Residues alanine 9 to leucine 29 form a helical membrane-spanning segment. Residues phenylalanine 80–proline 101 constitute an intramembrane region (pore-forming). The chain crosses the membrane as a helical span at residues valine 108–leucine 128. Residues glycine 129–asparagine 158 lie on the Cytoplasmic side of the membrane. The chain crosses the membrane as a helical span at residues methionine 159 to alanine 179. Residues alanine 189–glutamine 209 constitute an intramembrane region (pore-forming). A helical transmembrane segment spans residues phenylalanine 223 to valine 243. Residues leucine 244–isoleucine 318 lie on the Cytoplasmic side of the membrane. Residues leucine 296 to isoleucine 318 are disordered. Basic and acidic residues predominate over residues alanine 300–leucine 311.

This sequence belongs to the two pore domain potassium channel (TC 1.A.1.8) family. Heterodimer. Phosphorylated. As to expression, brain-specific. Highly expressed in auditory nuclei, in Purkinje cells and in olfactory bulb mitral cells.

Its subcellular location is the membrane. Its function is as follows. Probable potassium channel subunit. No channel activity observed in heterologous systems. May need to associate with another protein to form a functional channel. The chain is Potassium channel subfamily K member 15 (Kcnk15) from Rattus norvegicus (Rat).